The primary structure comprises 605 residues: MPPSGTEVGMIRNFCIIAHIDHGKSTLADRLLEATQTLARNQMSTAQVLDDMDLERERGITIKSHAVQMIYKSSDGKEYTLNLIDTPGHVDFSYEVSRSLAACEGALLVVDATQGVEAQTIANLYLAIEAGLEIIPVINKIDLPSSDVEGVARQIIDLIGVNRDEILQVSAKAGIGIGELMEAIVQRIPAPADNRQLPLRALIFDSVFDAYRGAVAYIRIVDGVLKKDDKVRFFANGKEFYADEIGTMSLKRQPKNVLEAGNVGYLICSIKDVKDAKVGDTVTLVENPASERLAGYKDVKPMVFSGLYPVESNDFENLRESLEKLSLNDASLVYTPETSAALGFGFRCGFLGLLHMEIIQERLEREYGVNIITTVPNVEYRVVMTSGETVEVDNPSQMPESTKVNWIEEPYVSMQIITMSEYIGNIMKLGMDRRGEYKNTDYLDTSRVSMHFEFPLGEVVFDFHDKLKSISKGYASMDYEYIGYRRSDLVKLDVLLNGEPVDALSSIVHRSKSYEWGRKLCSKLKGIIPRQMYEVAIQAAIGSRVIARETISAMRKNVLAKCYGGDISRKRKLIEKQKEGKKRMKQVGRVEVPQEAFLAVLNIDE.

Residues 9–192 (GMIRNFCIIA…AIVQRIPAPA (184 aa)) enclose the tr-type G domain. GTP contacts are provided by residues 21 to 26 (DHGKST) and 139 to 142 (NKID).

Belongs to the TRAFAC class translation factor GTPase superfamily. Classic translation factor GTPase family. LepA subfamily.

It localises to the cell inner membrane. It carries out the reaction GTP + H2O = GDP + phosphate + H(+). Required for accurate and efficient protein synthesis under certain stress conditions. May act as a fidelity factor of the translation reaction, by catalyzing a one-codon backward translocation of tRNAs on improperly translocated ribosomes. Back-translocation proceeds from a post-translocation (POST) complex to a pre-translocation (PRE) complex, thus giving elongation factor G a second chance to translocate the tRNAs correctly. Binds to ribosomes in a GTP-dependent manner. The chain is Elongation factor 4 from Chlorobaculum parvum (strain DSM 263 / NCIMB 8327) (Chlorobium vibrioforme subsp. thiosulfatophilum).